Reading from the N-terminus, the 282-residue chain is Chromatin modification-related protein YNG2 (282 aa).

Residues Leu-35 to Lys-86 are a coiled coil. The disordered stretch occupies residues Asp-123–Glu-217. A compositionally biased stretch (low complexity) spans Ala-129–Ser-143. Residue Ser-183 is modified to Phosphoserine. Thr-185 carries the phosphothreonine modification. The residue at position 188 (Ser-188) is a Phosphoserine. Over residues Ile-191 to Asn-203 the composition is skewed to basic and acidic residues. Over residues Ser-204 to Pro-214 the composition is skewed to polar residues. The PHD-type zinc finger occupies Thr-222–Glu-271. Zn(2+) contacts are provided by Cys-225, Cys-227, Cys-238, Cys-243, His-249, Cys-252, Cys-265, and Cys-268.

This sequence belongs to the ING family. Interacts with H3K4me3 and to a lesser extent with H3K4me2. Component of the NuA4 histone acetyltransferase complex composed of at least ACT1, ARP4, YAF9, VID21, SWC4, EAF3, EAF5, EAF6, EAF7, EPL1, ESA1, TRA1 and YNG2.

The protein resides in the nucleus. Its function is as follows. Component of the NuA4 histone acetyltransferase complex which is involved in transcriptional activation of selected genes principally by acetylation of nucleosomal histone H4 and H2A. The NuA4 complex is also involved in DNA repair. Involved in cell cycle progression and meiosis. This is Chromatin modification-related protein YNG2 (YNG2) from Saccharomyces cerevisiae (strain ATCC 204508 / S288c) (Baker's yeast).